The primary structure comprises 895 residues: Glutamate receptor 2.3 (895 aa).

The N-terminal stretch at 1–23 (MRTEKLFFCILLVFFFCLEFNRG) is a signal peptide. At 24–582 (QNNGKTLVDV…ILFMKPLSWK (559 aa)) the chain is on the extracellular side. N-linked (GlcNAc...) asparagine glycosylation is found at Asn-52, Asn-203, Asn-266, Asn-330, Asn-342, Asn-477, and Asn-542. Residues 583-603 (LWLTSFISFFLVGCTVWVLEY) form a helical membrane-spanning segment. Over 604-610 (KRNPDFS) the chain is Cytoplasmic. A helical transmembrane segment spans residues 611 to 631 (GPPRFQASTICWFAFSTMVFA). At 632–635 (PRER) the chain is on the cytoplasmic side. The chain crosses the membrane as a helical span at residues 636-656 (VFSFWARALVIAWYFLVLVLT). Residues 657–830 (QSYTASLASL…FTSRQLDIDS (174 aa)) are Extracellular-facing. The helical transmembrane segment at 831-851 (FLFLFVGVLLVCVMALGNFTY) threads the bilayer. Over 852 to 895 (CFLAKDQVSYLDKVEMSPCSSSQQMPVKRKTQLNMSQVHDQDSL) the chain is Cytoplasmic. Positions 873–895 (SQQMPVKRKTQLNMSQVHDQDSL) are disordered.

It belongs to the glutamate-gated ion channel (TC 1.A.10.1) family. May form heteromers. As to expression, expressed predominantly in roots.

The protein localises to the membrane. In terms of biological role, glutamate-gated receptor that probably acts as a non-selective cation channel. May be involved in light-signal transduction and calcium homeostasis via the regulation of calcium influx into cells. In Arabidopsis thaliana (Mouse-ear cress), this protein is Glutamate receptor 2.3 (GLR2.3).